A 220-amino-acid polypeptide reads, in one-letter code: Large ribosomal subunit protein uL3 (220 aa).

Residues 126–158 are disordered; that stretch reads GFQGAIKRHGQSRGPMSHGSRYHRRPGSMGMAS.

This sequence belongs to the universal ribosomal protein uL3 family. In terms of assembly, part of the 50S ribosomal subunit. Forms a cluster with proteins L14 and L19.

One of the primary rRNA binding proteins, it binds directly near the 3'-end of the 23S rRNA, where it nucleates assembly of the 50S subunit. The polypeptide is Large ribosomal subunit protein uL3 (Macrococcus caseolyticus (strain JCSC5402) (Macrococcoides caseolyticum)).